The chain runs to 388 residues: Cell adhesion molecule 4 (388 aa).

Residues 1 to 20 (MGRARRFQWPLLLLWAAAAG) form the signal peptide. The Ig-like V-type domain occupies 21–119 (PGAGQEVQTE…DTHHQIATLT (99 aa)). Topologically, residues 21–324 (PGAGQEVQTE…VEAQTSVPYA (304 aa)) are extracellular. N-linked (GlcNAc...) asparagine glycans are attached at residues Asn31 and Asn67. Cystine bridges form between Cys44–Cys104, Cys145–Cys199, and Cys245–Cys291. 2 Ig-like C2-type domains span residues 124-219 (PENP…YVLD) and 224-307 (PTAR…YVLV). A glycan (N-linked (GlcNAc...) asparagine) is linked at Asn286. A helical membrane pass occupies residues 325-345 (IVGGILALLVFLIICVLVGMV). Topologically, residues 346–388 (WCSVRQKGSYLTHEASGLDEQGEAREAFLNGSDGHKRKEEFFI) are cytoplasmic. Ser361 bears the Phosphoserine mark.

The protein belongs to the nectin family. In terms of assembly, monomer and homodimer. N-glycosylated. In terms of tissue distribution, expressed in brain, prostate, brain, kidney and some other organs.

It is found in the membrane. Involved in the cell-cell adhesion. Has calcium- and magnesium-independent cell-cell adhesion activity. May have tumor-suppressor activity. The polypeptide is Cell adhesion molecule 4 (CADM4) (Homo sapiens (Human)).